The primary structure comprises 145 residues: Large ribosomal subunit protein uL13 (145 aa).

The protein belongs to the universal ribosomal protein uL13 family. In terms of assembly, part of the 50S ribosomal subunit.

Functionally, this protein is one of the early assembly proteins of the 50S ribosomal subunit, although it is not seen to bind rRNA by itself. It is important during the early stages of 50S assembly. The protein is Large ribosomal subunit protein uL13 of Geobacillus thermodenitrificans (strain NG80-2).